A 259-amino-acid polypeptide reads, in one-letter code: TCF3 fusion partner homolog (259 aa).

Disordered regions lie at residues 50–72 (GGLGDSGLRERDEEEEAARGRRR) and 141–210 (EDDG…APVQ). Ser-167 carries the phosphoserine modification. Positions 167–178 (SPSQRTTATLDP) are enriched in polar residues. At Thr-172 the chain carries Phosphothreonine. Residues Ser-180 and Ser-188 each carry the phosphoserine modification. Position 203 is a phosphothreonine (Thr-203). A Glycyl lysine isopeptide (Lys-Gly) (interchain with G-Cter in SUMO2) cross-link involves residue Lys-222. Phosphoserine is present on Ser-255.

As to quaternary structure, interacts with NOL3; translocates NOL3 into the nucleus and negatively regulated TFPT-induced cell death. Component of the chromatin remodeling INO80 complex; specifically part of a complex module associated with the N-terminus of INO80.

It is found in the nucleus. In terms of biological role, appears to promote apoptosis in a p53/TP53-independent manner. Putative regulatory component of the chromatin remodeling INO80 complex which is involved in transcriptional regulation, DNA replication and probably DNA repair. The polypeptide is TCF3 fusion partner homolog (Tfpt) (Mus musculus (Mouse)).